Here is a 244-residue protein sequence, read N- to C-terminus: 5-oxoprolinase subunit A (244 aa).

Belongs to the LamB/PxpA family. Forms a complex composed of PxpA, PxpB and PxpC.

It carries out the reaction 5-oxo-L-proline + ATP + 2 H2O = L-glutamate + ADP + phosphate + H(+). Its function is as follows. Catalyzes the cleavage of 5-oxoproline to form L-glutamate coupled to the hydrolysis of ATP to ADP and inorganic phosphate. In Salmonella paratyphi C (strain RKS4594), this protein is 5-oxoprolinase subunit A.